The following is a 128-amino-acid chain: Ribonuclease P protein component 4 (128 aa).

4 residues coordinate Zn(2+): C63, C66, C92, and C95.

The protein belongs to the eukaryotic/archaeal RNase P protein component 4 family. In terms of assembly, consists of a catalytic RNA component and at least 4 protein subunits. Forms a subcomplex with Rnp1 which stimulates the catalytic RNA. Zn(2+) is required as a cofactor.

It is found in the cytoplasm. It catalyses the reaction Endonucleolytic cleavage of RNA, removing 5'-extranucleotides from tRNA precursor.. Functionally, part of ribonuclease P, a protein complex that generates mature tRNA molecules by cleaving their 5'-ends. This Methanocaldococcus jannaschii (strain ATCC 43067 / DSM 2661 / JAL-1 / JCM 10045 / NBRC 100440) (Methanococcus jannaschii) protein is Ribonuclease P protein component 4.